The chain runs to 605 residues: MSLFSAATTAVERTGYGSRYDHIFDMFHPIDGRIPAVCYKRLLETINVSGEDKDRLATLAGSILEGGDGSGGILTSSFTRESWRAALLLANVAQDGLPFDDPSQLVNVDTLTPMDFSEEGERSSINFSASTTGRSQTPLFGDDLDDHSIQSSRSESIIHNNGHSRGHSALDWNPEEQEALQQSQLSQSQLSRSTTPPPLNPQALVPESESGVWTAPPRPDFAPNKADSVTLAIVPEREGMFLFRHVNYSISSVSGTDRITVIRRYSDFSWLQDYLLKKYCFRQVPLLPPKRLAVNGHYLSSDNYFLERRRRGLTRFINQVLRHPVLGQDEAVRTFVTLRNDISGWKKSVFNTAREEFNGRTIDPKFVQQWDEQQATALWAGLIVELDRSHDSVVQLCVLLDRVAKRQEAQAVDSAKIAYNLGAALPPSARVLYSVADDGCVQQITRGLSRASARIETDCQLQQDEARGSQVGVLEEAKKYREALGSMRELFDRLEKYGGNNIPLLEKRIQQNQGRVTLARQRKALMSEIEKLDRAIKMDTEMIAAHKNRTWLIRECITEEIGLFQKTQLQISKLLQEFCVDKIKYAELYSDNWGGLDNDVMDLPV.

Disordered regions lie at residues 113 to 147 and 175 to 213; these read PMDFSEEGERSSINFSASTTGRSQTPLFGDDLDDH and EEQEALQQSQLSQSQLSRSTTPPPLNPQALVPESESGVW. The span at 123–138 shows a compositional bias: polar residues; the sequence is SSINFSASTTGRSQTP. Over residues 180–193 the composition is skewed to low complexity; it reads LQQSQLSQSQLSRS. The 118-residue stretch at 226–343 folds into the PX domain; sequence ADSVTLAIVP…TFVTLRNDIS (118 aa). 4 residues coordinate a 1,2-diacyl-sn-glycero-3-phospho-(1D-myo-inositol-3-phosphate): R264, S266, K290, and R309.

Belongs to the sorting nexin family.

The protein resides in the cytoplasm. The protein localises to the membrane. Its function is as follows. Required for vacuolar protein sorting. The sequence is that of Sorting nexin MVP1 (MVP1) from Yarrowia lipolytica (strain CLIB 122 / E 150) (Yeast).